The primary structure comprises 215 residues: Cytochrome c biogenesis ATP-binding export protein CcmA (215 aa).

The region spanning 8–215 (LQATALACER…RDLDLGQWSA (208 aa)) is the ABC transporter domain. ATP is bound at residue 40-47 (GPNGCGKT).

Belongs to the ABC transporter superfamily. CcmA exporter (TC 3.A.1.107) family. The complex is composed of two ATP-binding proteins (CcmA) and two transmembrane proteins (CcmB).

Its subcellular location is the cell inner membrane. It carries out the reaction heme b(in) + ATP + H2O = heme b(out) + ADP + phosphate + H(+). In terms of biological role, part of the ABC transporter complex CcmAB involved in the biogenesis of c-type cytochromes; once thought to export heme, this seems not to be the case, but its exact role is uncertain. Responsible for energy coupling to the transport system. The chain is Cytochrome c biogenesis ATP-binding export protein CcmA from Pseudomonas syringae pv. syringae (strain B728a).